An 811-amino-acid polypeptide reads, in one-letter code: G-type lectin S-receptor-like serine/threonine-protein kinase LECRK2 (811 aa).

Positions 1 to 23 are cleaved as a signal peptide; the sequence is MAPILFLPILQILLIYCTKSAQA. Positions 24 to 153 constitute a Bulb-type lectin domain; it reads QLNISIGSSL…DGATKWESFG (130 aa). The Extracellular segment spans residues 24–464; the sequence is QLNISIGSSL…DKKYWILGSS (441 aa). N-linked (GlcNAc...) asparagine glycosylation is found at asparagine 26, asparagine 39, asparagine 59, asparagine 219, asparagine 226, asparagine 237, and asparagine 242. Residues 292-344 form the EGF-like; atypical domain; the sequence is PENICQTIQTKVGSGACGFNSYCTFDGTKNTTNCLCPQRYKFFDNERTYKGCR. Disulfide bonds link cysteine 296–cysteine 314, cysteine 308–cysteine 325, cysteine 327–cysteine 343, cysteine 389–cysteine 411, and cysteine 393–cysteine 399. N-linked (GlcNAc...) asparagine glycosylation occurs at asparagine 321. A PAN domain is found at 352-436; that stretch reads CDLDETAAMV…LQATVLLKVP (85 aa). Residues 465 to 485 form a helical membrane-spanning segment; sequence LFFGSSVLVNFLLIFVLLFGT. Residues 486 to 811 are Cytoplasmic-facing; the sequence is YCSITSRKKT…DPSSYISSLA (326 aa). The Protein kinase domain maps to 521–795; the sequence is GGFHEVLGTG…KVMQMLDGAV (275 aa). ATP contacts are provided by residues 527–535 and lysine 551; that span reads LGTGASGIV. Aspartate 645 (proton acceptor) is an active-site residue.

This sequence belongs to the protein kinase superfamily. Ser/Thr protein kinase family.

Its subcellular location is the membrane. It carries out the reaction L-seryl-[protein] + ATP = O-phospho-L-seryl-[protein] + ADP + H(+). The enzyme catalyses L-threonyl-[protein] + ATP = O-phospho-L-threonyl-[protein] + ADP + H(+). In terms of biological role, involved in resistance against the herbivorous insect brown planthopper (N.lugens, BPH). Member of the BPH3 (BPH resistance locus 3) cluster which contains LECRK1, LECRK2 and LECRK3. This Oryza sativa subsp. indica (Rice) protein is G-type lectin S-receptor-like serine/threonine-protein kinase LECRK2.